Here is a 215-residue protein sequence, read N- to C-terminus: Pyrrolidone-carboxylate peptidase (215 aa).

Residues Glu-80, Cys-143, and His-167 contribute to the active site.

It belongs to the peptidase C15 family. In terms of assembly, homotetramer.

It is found in the cytoplasm. The catalysed reaction is Release of an N-terminal pyroglutamyl group from a polypeptide, the second amino acid generally not being Pro.. Functionally, removes 5-oxoproline from various penultimate amino acid residues except L-proline. This Bacillus cereus (strain ATCC 14579 / DSM 31 / CCUG 7414 / JCM 2152 / NBRC 15305 / NCIMB 9373 / NCTC 2599 / NRRL B-3711) protein is Pyrrolidone-carboxylate peptidase.